Consider the following 346-residue polypeptide: NADH-ubiquinone oxidoreductase chain 2 (346 aa).

10 consecutive transmembrane segments (helical) span residues 25–45, 52–72, 95–115, 124–144, 149–169, 178–198, 200–220, 242–262, 274–294, and 326–346; these read HWIL…PLIS, AIEA…LILF, CLML…HFWF, LITA…LLLL, LNTT…GWMG, ILAF…SYNP, LTIL…LSLA, ATVM…GFMP, EMTP…FFYL, and AILT…ITML.

This sequence belongs to the complex I subunit 2 family. In terms of assembly, core subunit of respiratory chain NADH dehydrogenase (Complex I) which is composed of 45 different subunits.

The protein localises to the mitochondrion inner membrane. The enzyme catalyses a ubiquinone + NADH + 5 H(+)(in) = a ubiquinol + NAD(+) + 4 H(+)(out). Functionally, core subunit of the mitochondrial membrane respiratory chain NADH dehydrogenase (Complex I) which catalyzes electron transfer from NADH through the respiratory chain, using ubiquinone as an electron acceptor. Essential for the catalytic activity and assembly of complex I. This is NADH-ubiquinone oxidoreductase chain 2 (MT-ND2) from Gallus gallus (Chicken).